We begin with the raw amino-acid sequence, 167 residues long: Endoribonuclease YbeY (167 aa).

Residues histidine 131, histidine 135, and histidine 141 each contribute to the Zn(2+) site.

This sequence belongs to the endoribonuclease YbeY family. Requires Zn(2+) as cofactor.

Its subcellular location is the cytoplasm. Single strand-specific metallo-endoribonuclease involved in late-stage 70S ribosome quality control and in maturation of the 3' terminus of the 16S rRNA. This Rickettsia akari (strain Hartford) protein is Endoribonuclease YbeY.